The primary structure comprises 228 residues: Urease accessory protein UreG (228 aa).

Residue 34-41 (GPVGSGKT) participates in GTP binding.

It belongs to the SIMIBI class G3E GTPase family. UreG subfamily. Homodimer. UreD, UreF and UreG form a complex that acts as a GTP-hydrolysis-dependent molecular chaperone, activating the urease apoprotein by helping to assemble the nickel containing metallocenter of UreC. The UreE protein probably delivers the nickel.

It localises to the cytoplasm. Functionally, facilitates the functional incorporation of the urease nickel metallocenter. This process requires GTP hydrolysis, probably effectuated by UreG. This is Urease accessory protein UreG from Rhodococcus opacus (strain B4).